The following is an 84-amino-acid chain: Hirudin-HM2 (84 aa).

An N-terminal signal peptide occupies residues 1–20 (MFSLKLFVVFLAVCICVSQA). The segment at 21 to 23 (VSY) is interaction with thrombin active site. Intrachain disulfides connect C26–C34, C36–C48, and C42–C57. The tract at residues 53-84 (SGNQCVHGEGTPKPKSQTEGDFEEIPDEDILN) is disordered. An O-linked (GalNAc...) threonine glycan is attached at T63. The span at 72-84 (GDFEEIPDEDILN) shows a compositional bias: acidic residues. Positions 73–84 (DFEEIPDEDILN) are interaction with fibrinogen-binding exosite of thrombin.

Belongs to the protease inhibitor I14 (hirudin) family.

It is found in the secreted. Its function is as follows. Hirudin is a potent thrombin-specific protease inhibitor. It forms a stable non-covalent complex with alpha-thrombin, thereby abolishing its ability to cleave fibrinogen. The chain is Hirudin-HM2 from Hirudinaria manillensis (Asian medical leech).